A 1311-amino-acid polypeptide reads, in one-letter code: Zinc finger protein 521 (1311 aa).

A C2H2-type 1; degenerate zinc finger spans residues 47 to 67; sequence HSCDSCLQVFESLSDITEHKI. Positions 81-108 are disordered; it reads DPSCSWPASSPSSKDQTSPSHGEGCDFG. A compositionally biased stretch (low complexity) spans 83–102; that stretch reads SCSWPASSPSSKDQTSPSHG. 7 consecutive C2H2-type zinc fingers follow at residues 118-140, 146-168, 174-196, 202-224, 246-269, 281-304, and 310-332; these read YPCQ…EQSH, FKCT…IKLH, YHCS…LKTH, YKCA…MQVH, QKCS…AECH, LQCM…EQVH, and NSCS…MDSH. The tract at residues 357–398 is disordered; that stretch reads TTPDSNLSVDSSTMVEAAPPIPKSRGRKRAAQQTSDMTGPSS. Composition is skewed to polar residues over residues 359-370 and 387-398; these read PDSNLSVDSSTM and AQQTSDMTGPSS. The segment at 405 to 429 adopts a C2H2-type 9; degenerate zinc-finger fold; it reads YSCIYCNKQLFSSLAVLQIHLKTMH. 3 consecutive C2H2-type zinc fingers follow at residues 437 to 460, 477 to 500, and 513 to 536; these read HICQ…KQVH, YQCN…RCSH, and FFCP…RQVH. S546 is subject to Phosphoserine. The C2H2-type 13; atypical zinc finger occupies 560 to 585; it reads YSCSYCTNSPIFNSVLKLNKHIKENH. Phosphoserine is present on residues S605 and S608. 7 C2H2-type zinc fingers span residues 634–656, 664–686, 694–717, 722–745, 752–775, 783–805, and 809–832; these read YICN…LKTH, LTCP…VTIH, YICE…LDMH, FRCT…AVKH, YRCT…KHNH, HKCI…ITTH, and YNCR…REKH. The segment at 863–883 is disordered; the sequence is TNSQESHNSHDGSEEDVDSSE. Residues 886–908 form a C2H2-type 21; degenerate zinc finger; it reads YGCDICGAAYTMETLLQNHQLRD. 3 consecutive C2H2-type zinc fingers follow at residues 930–952, 959–981, and 1020–1042; these read YKCN…MQTH, YMCP…KVTH, and FRCV…GTFH. The C2H2-type 25; degenerate zinc finger occupies 1065 to 1083; the sequence is YKCASCLKEFRSKQDLVKL. Residues 1105–1119 are compositionally biased toward low complexity; the sequence is PGLSLPPGASRPGLG. The disordered stretch occupies residues 1105 to 1136; sequence PGLSLPPGASRPGLGQNESLSAMEGKGKAGGL. 5 C2H2-type zinc fingers span residues 1138-1161, 1195-1217, 1225-1247, 1256-1279, and 1286-1309; these read TRCS…QTVH, YQCI…VANH, HECK…LIEH, FKCP…FSAH, and YDCT…MTQH. Residue K1146 forms a Glycyl lysine isopeptide (Lys-Gly) (interchain with G-Cter in SUMO2) linkage.

Belongs to the krueppel C2H2-type zinc-finger protein family. Interacts with EBF1. Interacts with SMAD1 and SMAD4. In terms of tissue distribution, widely expressed. Expressed in all B-cell stages.

The protein resides in the nucleus. Its function is as follows. Transcription factor that can both act as an activator or a repressor depending on the context. Involved in BMP signaling and in the regulation of the immature compartment of the hematopoietic system. Associates with SMADs in response to BMP2 leading to activate transcription of BMP target genes. Acts as a transcriptional repressor via its interaction with EBF1, a transcription factor involved specification of B-cell lineage; this interaction preventing EBF1 to bind DNA and activate target genes. The sequence is that of Zinc finger protein 521 (Znf521) from Mus musculus (Mouse).